The chain runs to 297 residues: Cytidine deaminase (297 aa).

CMP/dCMP-type deaminase domains follow at residues Ser54–Lys174 and Leu192–Val297. Asn95–Glu97 contributes to the substrate binding site. Residue His108 participates in Zn(2+) binding. Residue Glu110 is the Proton donor of the active site. Positions 135 and 138 each coordinate Zn(2+).

This sequence belongs to the cytidine and deoxycytidylate deaminase family. As to quaternary structure, homodimer. Zn(2+) is required as a cofactor.

It catalyses the reaction cytidine + H2O + H(+) = uridine + NH4(+). The enzyme catalyses 2'-deoxycytidine + H2O + H(+) = 2'-deoxyuridine + NH4(+). This enzyme scavenges exogenous and endogenous cytidine and 2'-deoxycytidine for UMP synthesis. This chain is Cytidine deaminase, found in Actinobacillus pleuropneumoniae serotype 5b (strain L20).